Reading from the N-terminus, the 152-residue chain is Male-specific protein scotti (152 aa).

Belongs to the male-specific scotti family.

Its function is as follows. Post-meiotically transcribed gene that has a role in late spermiogenesis; required for actin cone progression during spermatid individualization. This Drosophila mojavensis (Fruit fly) protein is Male-specific protein scotti.